Consider the following 309-residue polypeptide: Glutaminase (309 aa).

Substrate contacts are provided by serine 65, asparagine 117, glutamate 162, asparagine 169, tyrosine 193, tyrosine 245, and valine 263.

It belongs to the glutaminase family. In terms of assembly, homotetramer.

The enzyme catalyses L-glutamine + H2O = L-glutamate + NH4(+). The protein is Glutaminase of Bacillus cereus (strain ATCC 10987 / NRS 248).